Here is a 318-residue protein sequence, read N- to C-terminus: MNASALPHMHPSRSFQGLILTLHSYWAAQGCVILQPYDMEVGAGTFHPATTLRSLGPRPWNAAYVQPSRRPKDGRYGENPNRLQHYYQYQVILKPNPPNLQELYLGSLAAIGLDPLLHDIRFVEDDWESPTLGAWGLGWECWCDGMEVSQFTYFQQVCGIECAPVSGELTYGLERLAMYVQGVDNVYDLNFNGLEGSDKVTYGEVFLQAEQEYSRHNFEYANTEMLFRHFEDAERECRALLEAGAPRPSDNAALHRMVFPAYDQCIKASHVFNLLDARGVISVTERQSYILRVRDLAKACGEAFLNTEAGGATLATAA.

This sequence belongs to the class-II aminoacyl-tRNA synthetase family. Tetramer of two alpha and two beta subunits.

It is found in the cytoplasm. It carries out the reaction tRNA(Gly) + glycine + ATP = glycyl-tRNA(Gly) + AMP + diphosphate. This Chelativorans sp. (strain BNC1) protein is Glycine--tRNA ligase alpha subunit.